Consider the following 208-residue polypeptide: MKLLPSVVLKLFLAAVFSALVTGESLERLRRGLADGTSNLVSPTESTDQLLPPGGGRGREVLDLEEADLDLLRADFSSKPQALATPSKEERGKRKKKGKGLGKKRDPCLRKYKDFCIHGECKYVKELRAPSCICHPGYHGERCHGLSLPVKNRLYTYDHTTILAVVAVVLSSVCLLVIVGLLMFRYHRRGGYDVENEEKVKLGVTASH.

An N-terminal signal peptide occupies residues 1–23; the sequence is MKLLPSVVLKLFLAAVFSALVTG. Positions 24 to 62 are excised as a propeptide; that stretch reads ESLERLRRGLADGTSNLVSPTESTDQLLPPGGGRGREVL. Residues 24–161 lie on the Extracellular side of the membrane; it reads ESLERLRRGL…NRLYTYDHTT (138 aa). Residues 37 to 49 show a composition bias toward polar residues; that stretch reads TSNLVSPTESTDQ. Disordered regions lie at residues 37-57 and 81-104; these read TSNL…GGGR and QALA…LGKK. The O-linked (GalNAc...) threonine glycan is linked to Thr-85. Positions 93 to 102 are enriched in basic residues; the sequence is KRKKKGKGLG. An EGF-like domain is found at 104–144; sequence KRDPCLRKYKDFCIHGECKYVKELRAPSCICHPGYHGERCH. Disulfide bonds link Cys-108–Cys-121, Cys-116–Cys-132, and Cys-134–Cys-143. Residues 149–208 constitute a propeptide, C-terminal; sequence PVKNRLYTYDHTTILAVVAVVLSSVCLLVIVGLLMFRYHRRGGYDVENEEKVKLGVTASH. A helical transmembrane segment spans residues 162–182; the sequence is ILAVVAVVLSSVCLLVIVGLL. Residues 183–208 lie on the Cytoplasmic side of the membrane; it reads MFRYHRRGGYDVENEEKVKLGVTASH.

In terms of assembly, interacts with FBLN1. Interacts with EGFR and ERBB4. O-glycosylated. As to expression, macrophages, midbrain, cerebellum, hypothalamus, cerebral cortex, bulbourethral gland, lung, heart ventricle, kidney, skin, prostate, seminal vesicle, testis; at low levels in lymph node, thymus, spleen; not detected in pituitary, olfactory bulb, thyroid, duodenum, pancreas, liver, submaxillary gland.

It localises to the secreted. The protein localises to the extracellular space. Its subcellular location is the cell membrane. Functionally, growth factor that mediates its effects via EGFR, ERBB2 and ERBB4. Required for normal cardiac valve formation and normal heart function. Promotes smooth muscle cell proliferation. May be involved in macrophage-mediated cellular proliferation. It is mitogenic for fibroblasts, but not endothelial cells. It is able to bind EGF receptor/EGFR with higher affinity than EGF itself and is a far more potent mitogen for smooth muscle cells than EGF. Also acts as a diphtheria toxin receptor. In Sus scrofa (Pig), this protein is Proheparin-binding EGF-like growth factor (HBEGF).